The following is a 168-amino-acid chain: Iron-sulfur cluster assembly enzyme ISCU (168 aa).

A mitochondrion-targeting transit peptide spans 1-35; that stretch reads MAAATGAGRLRRAASALLLRSPRLPARELSAPARL. Phosphoserine is present on S15. The active-site Cysteine persulfide intermediate is C70. A Cysteine persulfide modification is found at C70. Zn(2+) contacts are provided by D72, C96, and C139. The active-site Cysteine persulfide intermediate is the C139. C139 is subject to Cysteine persulfide.

It belongs to the NifU family. In terms of assembly, homodimer; Tyr-36-mediated dimerization of two iron- and sulfide-containing ISCU subunit bind to the cysteine desulfurase complex. Component of the mitochondrial core iron-sulfur cluster (ISC) complex composed of NFS1, LYRM4, NDUFAB1, ISCU, FXN, and FDX2; this complex is a heterohexamer containing two copies of each monomer. Interacts (D-state) with NFS1 (homodimer form); each monomer interacts with the C-terminal regions of each NFS1 monomer. Interacts (monomer form) with FXN (via ferrous form); the interaction is possible when both are bound to the dimeric form of the cysteine desulfurase complex (NFS1:LYRM4) and enhances FXN interaction to the dimeric form of the cysteine desulfurase complex (NFS1:LYRM4). Interacts with GLRX5. Interacts (D-state) with HSPA9. Interacts (S-state) with HSCB; this interaction stimulates the ATPase activity of HSPA9. Component of a complex composed of FXN, NFS1, LYRM4 and ISCU. In terms of processing, cysteine persulfide is reduced by thiol-containing molecules such as glutathione and L-cysteine. Post-translationally, phosphorylation at Ser-15 is required for ISCU protein stabilization in the cytosol, whereas dephosphorylation of Ser-15, due to the inhibition of mTORC1 (mammalian target of rapamycin complex 1) complex, leads to degradation of the precursor form and ultimately to a decrease in the mitochondrial mature form.

It localises to the mitochondrion. In terms of biological role, mitochondrial scaffold protein, of the core iron-sulfur cluster (ISC) assembly complex, that provides the structural architecture on which the [2Fe-2S] clusters are assembled. The core iron-sulfur cluster (ISC) assembly complex is involved in the de novo synthesis of a [2Fe-2S] cluster, the first step of the mitochondrial iron-sulfur protein biogenesis. This process is initiated by the cysteine desulfurase complex (NFS1:LYRM4:NDUFAB1) that produces persulfide which is delivered on the scaffold protein ISCU in a FXN-dependent manner. Then this complex is stabilized by FDX2 which provides reducing equivalents to accomplish the [2Fe-2S] cluster assembly. Finally, the [2Fe-2S] cluster is transferred from ISCU to chaperone proteins, including HSCB, HSPA9 and GLRX5. Exists as two slow interchanging conformational states, a structured (S) and disordered (D) form. May modulate NFS1 desulfurase activity in a zinc-dependent manner. Modulates the interaction between FXN and the cysteine desulfurase complex. This chain is Iron-sulfur cluster assembly enzyme ISCU, found in Mus musculus (Mouse).